Here is a 1783-residue protein sequence, read N- to C-terminus: Collagen alpha-1(XXVII) chain A (1783 aa).

An N-terminal signal peptide occupies residues methionine 1–threonine 35. In terms of domain architecture, Laminin G-like spans threonine 73 to cysteine 235. Disordered stretches follow at residues serine 288–methionine 312, histidine 327–proline 524, valine 553–proline 744, proline 772–glycine 1461, and glycine 1512–proline 1546. Residues lysine 403–asparagine 415 are compositionally biased toward low complexity. The segment covering leucine 436–proline 447 has biased composition (pro residues). A compositionally biased stretch (polar residues) spans histidine 462–alanine 494. The tract at residues valine 553–proline 1547 is triple-helical region. A Collagen-like 1 domain is found at glycine 554–glycine 608. 5 stretches are compositionally biased toward low complexity: residues valine 622–valine 633, glutamate 651–alanine 661, glutamate 735–proline 744, proline 817–serine 829, and alanine 861–alanine 870. Collagen-like domains are found at residues glycine 818–arginine 873 and glycine 845–glycine 902. Residues glycine 926–glycine 935 show a composition bias toward gly residues. The span at glycine 967 to proline 976 shows a compositional bias: pro residues. 2 stretches are compositionally biased toward low complexity: residues serine 978 to arginine 988 and serine 1098 to aspartate 1129. The region spanning glycine 986–glycine 1043 is the Collagen-like 4 domain. Composition is skewed to basic and acidic residues over residues threonine 1131 to proline 1158, proline 1170 to lysine 1182, and alanine 1257 to valine 1267. The region spanning glycine 1269–glycine 1326 is the Collagen-like 5 domain. Low complexity-rich tracts occupy residues lysine 1334 to proline 1349 and leucine 1396 to isoleucine 1409. Collagen-like domains are found at residues glycine 1446–glycine 1503 and glycine 1497–isoleucine 1549. Positions proline 1537 to proline 1546 are enriched in pro residues. Positions leucine 1551–leucine 1783 are cleaved as a propeptide — C-terminal propeptide. The 195-residue stretch at proline 1589 to leucine 1783 folds into the Fibrillar collagen NC1 domain. 3 cysteine pairs are disulfide-bonded: cysteine 1619–cysteine 1651, cysteine 1660–cysteine 1781, and cysteine 1696–cysteine 1734. 4 residues coordinate Ca(2+): aspartate 1637, asparagine 1639, cysteine 1642, and aspartate 1645. Asparagine 1698 carries an N-linked (GlcNAc...) asparagine glycan.

It belongs to the fibrillar collagen family. In terms of tissue distribution, expressed dynamically in the notochord from late epiboly, spreading to the anterior notochord by 24 hpf, and then throughout the notochord by 30 hpf. Subsequently, notochordal expression becomes restricted to the distal tip of the tail by 48 hpf and is no longer detectable by 72 hpf. Also expressed throughout the floor plate and hypochord at 24 hpf, and in forming head cartilages and the first forming tooth.

Its subcellular location is the secreted. It is found in the extracellular space. The protein resides in the extracellular matrix. Its function is as follows. May play a role during the calcification of cartilage and the transition of cartilage to bone. Together with col27a1b, plays a role in development of the notochord and axial skeleton. In Danio rerio (Zebrafish), this protein is Collagen alpha-1(XXVII) chain A.